Here is a 551-residue protein sequence, read N- to C-terminus: Arylsulfatase (551 aa).

Positions 1–20 are cleaved as a signal peptide; it reads MKSAPFLFLLGLLGLVTAQT. Blocked amino end (Gln) is present on Gln-21. The Ca(2+) site is built by Asp-60, His-61, and Cys-100. Cys-100 functions as the Nucleophile in the catalytic mechanism. A 3-oxoalanine (Cys) modification is found at Cys-100. His-158 is a catalytic residue. Residues Asn-164, Asn-213, and Asn-296 are each glycosylated (N-linked (GlcNAc...) asparagine). Asp-308 and His-309 together coordinate Ca(2+).

This sequence belongs to the sulfatase family. Requires Ca(2+) as cofactor. The conversion to 3-oxoalanine (also known as C-formylglycine, FGly), of a serine or cysteine residue in prokaryotes and of a cysteine residue in eukaryotes, is critical for catalytic activity.

The protein localises to the cytoplasm. It is found in the secreted. Its subcellular location is the extracellular space. It localises to the extracellular matrix. It catalyses the reaction an aryl sulfate + H2O = a phenol + sulfate + H(+). In terms of biological role, may be a structural component of the extracellular matrices involved in cell movement during morphogenesis. The protein is Arylsulfatase of Hemicentrotus pulcherrimus (Sea urchin).